The sequence spans 290 residues: Prepilin leader peptidase/N-methyltransferase (290 aa).

The helical transmembrane segment at 13–33 (AFVLCTILLGLLVGSFLNVVV) threads the bilayer. Zn(2+) is bound by residues Cys-72, Cys-75, Cys-97, and Cys-100. Transmembrane regions (helical) follow at residues 128–148 (FTWQAGAMLLLTWGLLAMSLI), 158–178 (VLVLPLLWLGLIANHFGLFAS), 183–203 (LFGAVFGYLSLWSVFWLFKLV), 228–248 (ILPLTILLSSLVGAILGVIML), and 261–276 (FGPYLAIAGWIALLWG).

It belongs to the peptidase A24 family. Zn(2+) is required as a cofactor.

Its subcellular location is the cell inner membrane. It carries out the reaction Typically cleaves a -Gly-|-Phe- bond to release an N-terminal, basic peptide of 5-8 residues from type IV prepilin, and then N-methylates the new N-terminal amino group, the methyl donor being S-adenosyl-L-methionine.. Its function is as follows. Plays an essential role in type IV pili and type II pseudopili formation by proteolytically removing the leader sequence from substrate proteins and subsequently monomethylating the alpha-amino group of the newly exposed N-terminal phenylalanine. Substrates include proteins required for pilus biogenesis PilE, PilV, PilW, and PilX as well as some components of the type II general secretory apparatus GspG, GspH, GspI and GspJ. The polypeptide is Prepilin leader peptidase/N-methyltransferase (pilD) (Pseudomonas aeruginosa (strain ATCC 15692 / DSM 22644 / CIP 104116 / JCM 14847 / LMG 12228 / 1C / PRS 101 / PAO1)).